The primary structure comprises 398 residues: Queuine tRNA-ribosyltransferase (398 aa).

The active-site Proton acceptor is the D102. Substrate is bound by residues 102–106 (DSGGF), D156, Q205, and G232. An RNA binding region spans residues 263 to 269 (GVGTPED). D282 serves as the catalytic Nucleophile. The RNA binding; important for wobble base 34 recognition stretch occupies residues 287–291 (TRNAR). C320, C322, C325, and H362 together coordinate Zn(2+).

The protein belongs to the queuine tRNA-ribosyltransferase family. In terms of assembly, homodimer. Within each dimer, one monomer is responsible for RNA recognition and catalysis, while the other monomer binds to the replacement base PreQ1. Zn(2+) serves as cofactor.

It catalyses the reaction 7-aminomethyl-7-carbaguanine + guanosine(34) in tRNA = 7-aminomethyl-7-carbaguanosine(34) in tRNA + guanine. It functions in the pathway tRNA modification; tRNA-queuosine biosynthesis. Functionally, catalyzes the base-exchange of a guanine (G) residue with the queuine precursor 7-aminomethyl-7-deazaguanine (PreQ1) at position 34 (anticodon wobble position) in tRNAs with GU(N) anticodons (tRNA-Asp, -Asn, -His and -Tyr). Catalysis occurs through a double-displacement mechanism. The nucleophile active site attacks the C1' of nucleotide 34 to detach the guanine base from the RNA, forming a covalent enzyme-RNA intermediate. The proton acceptor active site deprotonates the incoming PreQ1, allowing a nucleophilic attack on the C1' of the ribose to form the product. After dissociation, two additional enzymatic reactions on the tRNA convert PreQ1 to queuine (Q), resulting in the hypermodified nucleoside queuosine (7-(((4,5-cis-dihydroxy-2-cyclopenten-1-yl)amino)methyl)-7-deazaguanosine). This is Queuine tRNA-ribosyltransferase from Polaromonas sp. (strain JS666 / ATCC BAA-500).